The chain runs to 231 residues: Octanoyltransferase (231 aa).

Residues 49-227 (PHLPEAVWLL…ALAARFHLAW (179 aa)) enclose the BPL/LPL catalytic domain. Substrate-binding positions include 91–98 (RGGEVTHH), 158–160 (AIG), and 171–173 (GLA). C189 functions as the Acyl-thioester intermediate in the catalytic mechanism.

The protein belongs to the LipB family.

The protein localises to the cytoplasm. It catalyses the reaction octanoyl-[ACP] + L-lysyl-[protein] = N(6)-octanoyl-L-lysyl-[protein] + holo-[ACP] + H(+). Its pathway is protein modification; protein lipoylation via endogenous pathway; protein N(6)-(lipoyl)lysine from octanoyl-[acyl-carrier-protein]: step 1/2. Functionally, catalyzes the transfer of endogenously produced octanoic acid from octanoyl-acyl-carrier-protein onto the lipoyl domains of lipoate-dependent enzymes. Lipoyl-ACP can also act as a substrate although octanoyl-ACP is likely to be the physiological substrate. This chain is Octanoyltransferase, found in Parasynechococcus marenigrum (strain WH8102).